The following is a 315-amino-acid chain: Olfactory receptor 8J3 (315 aa).

The Extracellular portion of the chain corresponds to 1–25; it reads MAPENFTRVTEFILTGVSSCPELQI. Asn5 carries an N-linked (GlcNAc...) asparagine glycan. Residues 26-46 form a helical membrane-spanning segment; that stretch reads PLFLVFLVLYVLTMAGNLGII. Residues 47 to 54 are Cytoplasmic-facing; that stretch reads TLTSVDSR. Residues 55-75 traverse the membrane as a helical segment; that stretch reads LQNPMYFFLRHLAIINLGNST. Residues 76–99 are Extracellular-facing; sequence VIAPKMLMNFLVKKKTTSFYECAT. A disulfide bridge links Cys97 with Cys189. A helical membrane pass occupies residues 100 to 120; that stretch reads QLGGFLFFIVSEVMMLAVMAY. The Cytoplasmic segment spans residues 121–139; the sequence is DRYVAICNPLLYMVVVSRR. The helical transmembrane segment at 140-160 threads the bilayer; the sequence is LCLLLVSLTYLYGFSTAIVVS. Residues 161–197 lie on the Extracellular side of the membrane; sequence PCIFSVSYCSSNIINHFYCDIAPLLALSCSDTYIPET. A helical membrane pass occupies residues 198 to 217; that stretch reads IVFISAATNLVFSMITVLVS. The Cytoplasmic segment spans residues 218 to 237; it reads YFNIVLSILRIRSPEGRKKA. Residues 238–258 traverse the membrane as a helical segment; it reads FSTCASHMIAVTVFYGTMLFM. Residues 259 to 271 are Extracellular-facing; it reads YLQPQTNHSLDTD. Asn265 carries an N-linked (GlcNAc...) asparagine glycan. Residues 272–292 traverse the membrane as a helical segment; sequence KMASVFYTLVIPMLNPLIYSL. The Cytoplasmic segment spans residues 293 to 315; that stretch reads RNNDVNVALKKFMENPCYSFKSM.

This sequence belongs to the G-protein coupled receptor 1 family.

Its subcellular location is the cell membrane. In terms of biological role, odorant receptor. The sequence is that of Olfactory receptor 8J3 (OR8J3) from Homo sapiens (Human).